A 380-amino-acid chain; its full sequence is Cytochrome b (380 aa).

Transmembrane regions (helical) follow at residues F33 to M53, W77 to V98, W113 to L133, and F178 to L198. Heme b contacts are provided by H83 and H97. Positions 182 and 196 each coordinate heme b. H201 provides a ligand contact to a ubiquinone. 4 helical membrane passes run T226–A246, L288–Y308, L320–A340, and F347–P367.

This sequence belongs to the cytochrome b family. In terms of assembly, the cytochrome bc1 complex contains 11 subunits: 3 respiratory subunits (MT-CYB, CYC1 and UQCRFS1), 2 core proteins (UQCRC1 and UQCRC2) and 6 low-molecular weight proteins (UQCRH/QCR6, UQCRB/QCR7, UQCRQ/QCR8, UQCR10/QCR9, UQCR11/QCR10 and a cleavage product of UQCRFS1). This cytochrome bc1 complex then forms a dimer. Heme b serves as cofactor.

Its subcellular location is the mitochondrion inner membrane. Its function is as follows. Component of the ubiquinol-cytochrome c reductase complex (complex III or cytochrome b-c1 complex) that is part of the mitochondrial respiratory chain. The b-c1 complex mediates electron transfer from ubiquinol to cytochrome c. Contributes to the generation of a proton gradient across the mitochondrial membrane that is then used for ATP synthesis. The protein is Cytochrome b (MT-CYB) of Cricetomys emini (Emin's giant pouched rat).